We begin with the raw amino-acid sequence, 602 residues long: RNA-binding NOB1-like protein (602 aa).

The segment at 1–25 is disordered; sequence MDPKPTSMWSSIVKKDPPSKPPVND. A PINc domain is found at 48 to 134; the sequence is VVDANAIIEG…LKLIALSYTL (87 aa). Disordered regions lie at residues 258-278 and 301-331; these read SQGQ…VSRS and IQKD…GEDI. Basic and acidic residues predominate over residues 301 to 329; the sequence is IQKDQEADKARHTKEANETHAKDSGKNGE. Residues 331 to 365 adopt a coiled-coil conformation; the sequence is ISSILKDMRLEEESLRALQEETEETNAEATLINGE. Residues 452-522 form an NOB1 zinc finger; that stretch reads IRQLHRWILK…QYSIPMPKGG (71 aa). Positions 462, 465, 477, and 480 each coordinate Zn(2+).

It belongs to the NOB1 family. In terms of assembly, component of the small ribosomal subunit, ribosomal RNA processing complex (SSU RRP complex). In terms of tissue distribution, highly expressed in flowers and siliques and at lower levels in roots, hypocotyls, stems, leaves and seeds.

It is found in the nucleus. The protein localises to the nucleoplasm. It localises to the cytoplasm. In terms of biological role, essential protein required during embryogenesis and pollen development. Endonuclease cleaving pre-rRNA at the 3' end of the mature 18S rRNA (D-site); cleaves 20S pre-rRNA in the cytoplasm. Required for processing of 20S pre-rRNA precursor and biogenesis of 40S ribosomal subunits. In Arabidopsis thaliana (Mouse-ear cress), this protein is RNA-binding NOB1-like protein.